The primary structure comprises 381 residues: Cytochrome b (381 aa).

The next 4 helical transmembrane spans lie at 34 to 54 (FGSL…FLAM), 78 to 99 (WLIR…YIHI), 114 to 134 (WNIG…GYVL), and 179 to 199 (FFAF…IHVL). Residues histidine 84 and histidine 98 each contribute to the heme b site. The heme b site is built by histidine 183 and histidine 197. Histidine 202 lines the a ubiquinone pocket. 4 helical membrane passes run 227-247 (YKDA…ALFL), 289-309 (LGGV…PLLH), 321-341 (LTQV…WIGG), and 348-368 (FILI…IAMP).

Belongs to the cytochrome b family. As to quaternary structure, the cytochrome bc1 complex contains 3 respiratory subunits (MT-CYB, CYC1 and UQCRFS1), 2 core proteins (UQCRC1 and UQCRC2) and probably 6 low-molecular weight proteins. Heme b serves as cofactor.

It localises to the mitochondrion inner membrane. Component of the ubiquinol-cytochrome c reductase complex (complex III or cytochrome b-c1 complex) that is part of the mitochondrial respiratory chain. The b-c1 complex mediates electron transfer from ubiquinol to cytochrome c. Contributes to the generation of a proton gradient across the mitochondrial membrane that is then used for ATP synthesis. This is Cytochrome b (mt-cyb) from Isurus paucus (Longfin mako shark).